The sequence spans 295 residues: 4-diphosphocytidyl-2-C-methyl-D-erythritol kinase (295 aa).

The active site involves K22. Residue 106 to 116 (PAGGGFGGGSS) coordinates ATP. D148 is a catalytic residue.

It belongs to the GHMP kinase family. IspE subfamily.

The catalysed reaction is 4-CDP-2-C-methyl-D-erythritol + ATP = 4-CDP-2-C-methyl-D-erythritol 2-phosphate + ADP + H(+). Its pathway is isoprenoid biosynthesis; isopentenyl diphosphate biosynthesis via DXP pathway; isopentenyl diphosphate from 1-deoxy-D-xylulose 5-phosphate: step 3/6. Catalyzes the phosphorylation of the position 2 hydroxy group of 4-diphosphocytidyl-2C-methyl-D-erythritol. The chain is 4-diphosphocytidyl-2-C-methyl-D-erythritol kinase from Xanthomonas euvesicatoria pv. vesicatoria (strain 85-10) (Xanthomonas campestris pv. vesicatoria).